The sequence spans 401 residues: Probable aspartate/prephenate aminotransferase (401 aa).

Residues glycine 39, tryptophan 125, and asparagine 175 each contribute to the L-aspartate site. Lysine 239 carries the N6-(pyridoxal phosphate)lysine modification. Position 375 (arginine 375) interacts with L-aspartate.

This sequence belongs to the class-I pyridoxal-phosphate-dependent aminotransferase family. In terms of assembly, homodimer. The cofactor is pyridoxal 5'-phosphate.

Its subcellular location is the cytoplasm. It catalyses the reaction L-aspartate + 2-oxoglutarate = oxaloacetate + L-glutamate. It carries out the reaction L-arogenate + 2-oxoglutarate = prephenate + L-glutamate. Catalyzes the reversible conversion of aspartate and 2-oxoglutarate to glutamate and oxaloacetate. Can also transaminate prephenate in the presence of glutamate. This chain is Probable aspartate/prephenate aminotransferase (aatA), found in Rickettsia conorii (strain ATCC VR-613 / Malish 7).